Here is a 573-residue protein sequence, read N- to C-terminus: Ascochitine biosynthesis cluster transcriptional regulator (573 aa).

Its subcellular location is the nucleus. Functionally, transcription factor that regulates the expression of the gene cluster that mediates the biosynthesis of the mycotoxin ascochitine, an o-quinone methide that plays a possible protective role against other microbial competitors in nature and is considered to be important for pathogenicity of legume-associated Didymella species. The protein is Ascochitine biosynthesis cluster transcriptional regulator of Didymella fabae (Leaf and pod spot disease fungus).